Consider the following 632-residue polypeptide: tRNA uridine 5-carboxymethylaminomethyl modification enzyme MnmG (632 aa).

FAD-binding positions include 15-20 (GAGHAG), Ile-127, and Ser-182. 276-290 (GPRYCPSIEDKIVRF) serves as a coordination point for NAD(+). Residue Gln-373 coordinates FAD.

This sequence belongs to the MnmG family. Homodimer. Heterotetramer of two MnmE and two MnmG subunits. Requires FAD as cofactor.

Its subcellular location is the cytoplasm. Its function is as follows. NAD-binding protein involved in the addition of a carboxymethylaminomethyl (cmnm) group at the wobble position (U34) of certain tRNAs, forming tRNA-cmnm(5)s(2)U34. This chain is tRNA uridine 5-carboxymethylaminomethyl modification enzyme MnmG, found in Streptococcus pyogenes serotype M6 (strain ATCC BAA-946 / MGAS10394).